Consider the following 95-residue polypeptide: Aspartyl/glutamyl-tRNA(Asn/Gln) amidotransferase subunit C (95 aa).

The protein belongs to the GatC family. As to quaternary structure, heterotrimer of A, B and C subunits.

It carries out the reaction L-glutamyl-tRNA(Gln) + L-glutamine + ATP + H2O = L-glutaminyl-tRNA(Gln) + L-glutamate + ADP + phosphate + H(+). The catalysed reaction is L-aspartyl-tRNA(Asn) + L-glutamine + ATP + H2O = L-asparaginyl-tRNA(Asn) + L-glutamate + ADP + phosphate + 2 H(+). Functionally, allows the formation of correctly charged Asn-tRNA(Asn) or Gln-tRNA(Gln) through the transamidation of misacylated Asp-tRNA(Asn) or Glu-tRNA(Gln) in organisms which lack either or both of asparaginyl-tRNA or glutaminyl-tRNA synthetases. The reaction takes place in the presence of glutamine and ATP through an activated phospho-Asp-tRNA(Asn) or phospho-Glu-tRNA(Gln). This chain is Aspartyl/glutamyl-tRNA(Asn/Gln) amidotransferase subunit C, found in Geobacter metallireducens (strain ATCC 53774 / DSM 7210 / GS-15).